We begin with the raw amino-acid sequence, 250 residues long: ATP synthase subunit a (250 aa).

Transmembrane regions (helical) follow at residues 26–46, 84–104, 114–134, 143–163, 193–213, and 216–236; these read FTNA…FLYL, FFPM…LGMF, IIVT…YGFY, LFVP…IEVI, FVAS…LPLI, and VALT…FAVL.

This sequence belongs to the ATPase A chain family. As to quaternary structure, F-type ATPases have 2 components, CF(1) - the catalytic core - and CF(0) - the membrane proton channel. CF(1) has five subunits: alpha(3), beta(3), gamma(1), delta(1), epsilon(1). CF(0) has three main subunits: a(1), b(2) and c(9-12). The alpha and beta chains form an alternating ring which encloses part of the gamma chain. CF(1) is attached to CF(0) by a central stalk formed by the gamma and epsilon chains, while a peripheral stalk is formed by the delta and b chains.

The protein localises to the cell inner membrane. Key component of the proton channel; it plays a direct role in the translocation of protons across the membrane. This Sinorhizobium fredii (strain NBRC 101917 / NGR234) protein is ATP synthase subunit a.